A 372-amino-acid polypeptide reads, in one-letter code: Glutamate 5-kinase (372 aa).

Position 14 (K14) interacts with ATP. Positions 54, 141, and 153 each coordinate substrate. 173–174 (TD) serves as a coordination point for ATP. The 79-residue stretch at 280–358 (RGRVIIDAGA…SEIESVLGHL (79 aa)) folds into the PUA domain.

This sequence belongs to the glutamate 5-kinase family.

The protein localises to the cytoplasm. The catalysed reaction is L-glutamate + ATP = L-glutamyl 5-phosphate + ADP. The protein operates within amino-acid biosynthesis; L-proline biosynthesis; L-glutamate 5-semialdehyde from L-glutamate: step 1/2. In terms of biological role, catalyzes the transfer of a phosphate group to glutamate to form L-glutamate 5-phosphate. This chain is Glutamate 5-kinase, found in Cupriavidus metallidurans (strain ATCC 43123 / DSM 2839 / NBRC 102507 / CH34) (Ralstonia metallidurans).